A 380-amino-acid polypeptide reads, in one-letter code: Cytochrome b (380 aa).

The next 4 helical transmembrane spans lie at 34–54 (FGSLLGLCLMTQILTGLLLAM), 78–99 (WLIRNLHANGASFFFICIYLHI), 114–134 (WNTGVILLLTLMATAFVGYVL), and 179–199 (FFALHFLLPFMIAGLTLIHLT). Residues histidine 84 and histidine 98 each contribute to the heme b site. Histidine 183 and histidine 197 together coordinate heme b. Histidine 202 is a binding site for a ubiquinone. A run of 4 helical transmembrane segments spans residues 227 to 247 (TKDLLGFLLMIAPLLTLAMFS), 289 to 309 (LGGVLALAASVLILFLAPFLH), 321 to 341 (LSQLLFWILVANLLILTWVGS), and 348 to 368 (FIIIGQIASLTYFTILLILFP).

Belongs to the cytochrome b family. In terms of assembly, the cytochrome bc1 complex contains 11 subunits: 3 respiratory subunits (MT-CYB, CYC1 and UQCRFS1), 2 core proteins (UQCRC1 and UQCRC2) and 6 low-molecular weight proteins (UQCRH/QCR6, UQCRB/QCR7, UQCRQ/QCR8, UQCR10/QCR9, UQCR11/QCR10 and a cleavage product of UQCRFS1). This cytochrome bc1 complex then forms a dimer. Requires heme b as cofactor.

It localises to the mitochondrion inner membrane. Component of the ubiquinol-cytochrome c reductase complex (complex III or cytochrome b-c1 complex) that is part of the mitochondrial respiratory chain. The b-c1 complex mediates electron transfer from ubiquinol to cytochrome c. Contributes to the generation of a proton gradient across the mitochondrial membrane that is then used for ATP synthesis. In Amazilia tzacatl (Rufous-tailed hummingbird), this protein is Cytochrome b (MT-CYB).